A 196-amino-acid polypeptide reads, in one-letter code: Pyridoxal 5'-phosphate synthase subunit PdxT (196 aa).

Position 47–49 (47–49) interacts with L-glutamine; it reads GES. Cys-79 serves as the catalytic Nucleophile. L-glutamine contacts are provided by residues Arg-106 and 134-135; that span reads IR. Residues His-170 and Glu-172 each act as charge relay system in the active site.

This sequence belongs to the glutaminase PdxT/SNO family. In terms of assembly, in the presence of PdxS, forms a dodecamer of heterodimers. Only shows activity in the heterodimer.

It carries out the reaction aldehydo-D-ribose 5-phosphate + D-glyceraldehyde 3-phosphate + L-glutamine = pyridoxal 5'-phosphate + L-glutamate + phosphate + 3 H2O + H(+). The enzyme catalyses L-glutamine + H2O = L-glutamate + NH4(+). The protein operates within cofactor biosynthesis; pyridoxal 5'-phosphate biosynthesis. Its function is as follows. Catalyzes the hydrolysis of glutamine to glutamate and ammonia as part of the biosynthesis of pyridoxal 5'-phosphate. The resulting ammonia molecule is channeled to the active site of PdxS. The chain is Pyridoxal 5'-phosphate synthase subunit PdxT from Bacillus cytotoxicus (strain DSM 22905 / CIP 110041 / 391-98 / NVH 391-98).